A 230-amino-acid polypeptide reads, in one-letter code: 5'-methylthioadenosine/S-adenosylhomocysteine nucleosidase (230 aa).

The active-site Proton acceptor is the glutamate 12. Residues glycine 78, isoleucine 153, and 174-175 (ME) contribute to the substrate site. Catalysis depends on aspartate 198, which acts as the Proton donor.

The protein belongs to the PNP/UDP phosphorylase family. MtnN subfamily.

The catalysed reaction is S-adenosyl-L-homocysteine + H2O = S-(5-deoxy-D-ribos-5-yl)-L-homocysteine + adenine. It carries out the reaction S-methyl-5'-thioadenosine + H2O = 5-(methylsulfanyl)-D-ribose + adenine. The enzyme catalyses 5'-deoxyadenosine + H2O = 5-deoxy-D-ribose + adenine. It participates in amino-acid biosynthesis; L-methionine biosynthesis via salvage pathway; S-methyl-5-thio-alpha-D-ribose 1-phosphate from S-methyl-5'-thioadenosine (hydrolase route): step 1/2. Functionally, catalyzes the irreversible cleavage of the glycosidic bond in both 5'-methylthioadenosine (MTA) and S-adenosylhomocysteine (SAH/AdoHcy) to adenine and the corresponding thioribose, 5'-methylthioribose and S-ribosylhomocysteine, respectively. Also cleaves 5'-deoxyadenosine, a toxic by-product of radical S-adenosylmethionine (SAM) enzymes, into 5-deoxyribose and adenine. In Shewanella pealeana (strain ATCC 700345 / ANG-SQ1), this protein is 5'-methylthioadenosine/S-adenosylhomocysteine nucleosidase.